Consider the following 347-residue polypeptide: Selenide, water dikinase (347 aa).

Cys16 is an active-site residue. Residues Lys19 and 47–49 (TRD) each bind ATP. Asp50 lines the Mg(2+) pocket. ATP-binding positions include Asp67, Asp90, and 138–140 (GHS). Position 90 (Asp90) interacts with Mg(2+). Asp226 provides a ligand contact to Mg(2+).

This sequence belongs to the selenophosphate synthase 1 family. Class I subfamily. In terms of assembly, homodimer. Mg(2+) serves as cofactor.

The enzyme catalyses hydrogenselenide + ATP + H2O = selenophosphate + AMP + phosphate + 2 H(+). Synthesizes selenophosphate from selenide and ATP. This Photorhabdus laumondii subsp. laumondii (strain DSM 15139 / CIP 105565 / TT01) (Photorhabdus luminescens subsp. laumondii) protein is Selenide, water dikinase.